A 422-amino-acid chain; its full sequence is 3-isopropylmalate dehydratase large subunit (422 aa).

Cysteine 294, cysteine 354, and cysteine 357 together coordinate [4Fe-4S] cluster.

It belongs to the aconitase/IPM isomerase family. LeuC type 2 subfamily. Heterodimer of LeuC and LeuD. The cofactor is [4Fe-4S] cluster.

The enzyme catalyses (2R,3S)-3-isopropylmalate = (2S)-2-isopropylmalate. It participates in amino-acid biosynthesis; L-leucine biosynthesis; L-leucine from 3-methyl-2-oxobutanoate: step 2/4. Its function is as follows. Catalyzes the isomerization between 2-isopropylmalate and 3-isopropylmalate, via the formation of 2-isopropylmaleate. The chain is 3-isopropylmalate dehydratase large subunit from Mycolicibacterium smegmatis (strain ATCC 700084 / mc(2)155) (Mycobacterium smegmatis).